Consider the following 118-residue polypeptide: MSDNFAAVGIALVVAIAINLIMMLMPKLLAPKKPVPEKLTPYEGGNQTIGRTWLGFKSNYFLYALVFTAFDVETVFLFPWALSFRQLGTFAFIEMFVFIVILLVGFWYAWKEGALEWM.

3 helical membrane passes run 5–25, 61–81, and 90–110; these read FAAVGIALVVAIAINLIMMLM, FLYALVFTAFDVETVFLFPWA, and FAFIEMFVFIVILLVGFWYAW.

It belongs to the complex I subunit 3 family. NDH-1 is composed of 14 different subunits. Subunits NuoA, H, J, K, L, M, N constitute the membrane sector of the complex.

It is found in the cell membrane. The enzyme catalyses a quinone + NADH + 5 H(+)(in) = a quinol + NAD(+) + 4 H(+)(out). Its function is as follows. NDH-1 shuttles electrons from NADH, via FMN and iron-sulfur (Fe-S) centers, to quinones in the respiratory chain. The immediate electron acceptor for the enzyme in this species is believed to be a menaquinone. Couples the redox reaction to proton translocation (for every two electrons transferred, four hydrogen ions are translocated across the cytoplasmic membrane), and thus conserves the redox energy in a proton gradient. The sequence is that of NADH-quinone oxidoreductase subunit A from Desulfitobacterium hafniense (strain Y51).